Reading from the N-terminus, the 705-residue chain is Ribonuclease R (705 aa).

The region spanning 240–567 (RRDLREQLCF…VHRLLKKALR (328 aa)) is the RNB domain. Residues 615-696 (GEEFIGIITG…ERARVEFELI (82 aa)) enclose the S1 motif domain.

Belongs to the RNR ribonuclease family. RNase R subfamily.

The protein resides in the cytoplasm. The enzyme catalyses Exonucleolytic cleavage in the 3'- to 5'-direction to yield nucleoside 5'-phosphates.. Its function is as follows. 3'-5' exoribonuclease that releases 5'-nucleoside monophosphates and is involved in maturation of structured RNAs. This Aquifex aeolicus (strain VF5) protein is Ribonuclease R.